A 219-amino-acid polypeptide reads, in one-letter code: Guanylate kinase (219 aa).

Residues 15-194 (GLMFVLSSPS…AFAEVQSILK (180 aa)) form the Guanylate kinase-like domain. An ATP-binding site is contributed by 22 to 29 (SPSGAGKT).

The protein belongs to the guanylate kinase family.

It is found in the cytoplasm. It carries out the reaction GMP + ATP = GDP + ADP. Its function is as follows. Essential for recycling GMP and indirectly, cGMP. In Bradyrhizobium diazoefficiens (strain JCM 10833 / BCRC 13528 / IAM 13628 / NBRC 14792 / USDA 110), this protein is Guanylate kinase.